A 125-amino-acid chain; its full sequence is Large ribosomal subunit protein eL31 (125 aa).

It belongs to the eukaryotic ribosomal protein eL31 family. In terms of assembly, component of the large ribosomal subunit.

It is found in the cytoplasm. Component of the large ribosomal subunit. The ribosome is a large ribonucleoprotein complex responsible for the synthesis of proteins in the cell. In Ictalurus punctatus (Channel catfish), this protein is Large ribosomal subunit protein eL31 (rpl31).